A 330-amino-acid chain; its full sequence is Aspartate--ammonia ligase (330 aa).

This sequence belongs to the class-II aminoacyl-tRNA synthetase family. AsnA subfamily.

Its subcellular location is the cytoplasm. The enzyme catalyses L-aspartate + NH4(+) + ATP = L-asparagine + AMP + diphosphate + H(+). The protein operates within amino-acid biosynthesis; L-asparagine biosynthesis; L-asparagine from L-aspartate (ammonia route): step 1/1. This chain is Aspartate--ammonia ligase, found in Actinobacillus pleuropneumoniae serotype 7 (strain AP76).